The primary structure comprises 138 residues: Nucleoside diphosphate kinase (138 aa).

ATP is bound by residues K9, F57, R85, T91, R102, and N112. Catalysis depends on H115, which acts as the Pros-phosphohistidine intermediate.

This sequence belongs to the NDK family. As to quaternary structure, homotetramer. It depends on Mg(2+) as a cofactor.

It localises to the cytoplasm. It carries out the reaction a 2'-deoxyribonucleoside 5'-diphosphate + ATP = a 2'-deoxyribonucleoside 5'-triphosphate + ADP. The catalysed reaction is a ribonucleoside 5'-diphosphate + ATP = a ribonucleoside 5'-triphosphate + ADP. Major role in the synthesis of nucleoside triphosphates other than ATP. The ATP gamma phosphate is transferred to the NDP beta phosphate via a ping-pong mechanism, using a phosphorylated active-site intermediate. In Deinococcus deserti (strain DSM 17065 / CIP 109153 / LMG 22923 / VCD115), this protein is Nucleoside diphosphate kinase.